We begin with the raw amino-acid sequence, 447 residues long: Cysteine--tRNA ligase (447 aa).

Residue C28 coordinates Zn(2+). Residues 30–40 (PTVYNYIHIGN) carry the 'HIGH' region motif. Zn(2+) is bound by residues C211, H236, and E240. The 'KMSKS' region signature appears at 268 to 272 (KMSKS). K271 provides a ligand contact to ATP.

This sequence belongs to the class-I aminoacyl-tRNA synthetase family. As to quaternary structure, monomer. The cofactor is Zn(2+).

It is found in the cytoplasm. It catalyses the reaction tRNA(Cys) + L-cysteine + ATP = L-cysteinyl-tRNA(Cys) + AMP + diphosphate. In Streptococcus pyogenes serotype M3 (strain ATCC BAA-595 / MGAS315), this protein is Cysteine--tRNA ligase.